Here is a 466-residue protein sequence, read N- to C-terminus: Glutamate--tRNA ligase (466 aa).

The 'HIGH' region motif lies at 10–20 (PSPTGYLHIGG). A 'KMSKS' region motif is present at residues 237-241 (RLSKR). Position 240 (Lys-240) interacts with ATP.

The protein belongs to the class-I aminoacyl-tRNA synthetase family. Glutamate--tRNA ligase type 1 subfamily. As to quaternary structure, monomer.

It is found in the cytoplasm. The catalysed reaction is tRNA(Glu) + L-glutamate + ATP = L-glutamyl-tRNA(Glu) + AMP + diphosphate. In terms of biological role, catalyzes the attachment of glutamate to tRNA(Glu) in a two-step reaction: glutamate is first activated by ATP to form Glu-AMP and then transferred to the acceptor end of tRNA(Glu). In Syntrophotalea carbinolica (strain DSM 2380 / NBRC 103641 / GraBd1) (Pelobacter carbinolicus), this protein is Glutamate--tRNA ligase.